A 201-amino-acid polypeptide reads, in one-letter code: Glycerol-3-phosphate acyltransferase (201 aa).

5 helical membrane passes run 9-29 (LTLIGALVFGYFLGSIPFGLI), 60-80 (LAAATLIFDMLKGTVAVLVAS), 86-106 (AAIGAGFGAFIGHLFPVWIGF), 116-136 (LGVLIGLAWPGALVFAAVWIV), and 153-173 (IVVPIALYSRGYPAIAVLFAI).

Belongs to the PlsY family. In terms of assembly, probably interacts with PlsX.

The protein resides in the cell inner membrane. It catalyses the reaction an acyl phosphate + sn-glycerol 3-phosphate = a 1-acyl-sn-glycero-3-phosphate + phosphate. It functions in the pathway lipid metabolism; phospholipid metabolism. Catalyzes the transfer of an acyl group from acyl-phosphate (acyl-PO(4)) to glycerol-3-phosphate (G3P) to form lysophosphatidic acid (LPA). This enzyme utilizes acyl-phosphate as fatty acyl donor, but not acyl-CoA or acyl-ACP. This chain is Glycerol-3-phosphate acyltransferase, found in Brucella anthropi (strain ATCC 49188 / DSM 6882 / CCUG 24695 / JCM 21032 / LMG 3331 / NBRC 15819 / NCTC 12168 / Alc 37) (Ochrobactrum anthropi).